A 118-amino-acid polypeptide reads, in one-letter code: Small ribosomal subunit protein mS37 (118 aa).

The region spanning 42–84 (EATCITEMSMMMACWKQNEFRDEACRKEIQDFFDCSSRAQEAR) is the CHCH domain. 2 consecutive short sequence motifs (cx9C motif) follow at residues 45-55 (CITEMSMMMAC) and 66-76 (CRKEIQDFFDC). 2 disulfide bridges follow: Cys45-Cys76 and Cys55-Cys66. The tract at residues 86 to 105 (MRSIQESLGQSESLSPHKMT) is disordered. Positions 89–99 (IQESLGQSESL) are enriched in polar residues.

It belongs to the mitochondrion-specific ribosomal protein mS37 family. Component of the mitochondrial ribosome small subunit (28S) which comprises a 12S rRNA and about 30 distinct proteins.

The protein resides in the mitochondrion. Its subcellular location is the nucleus. In Mus musculus (Mouse), this protein is Small ribosomal subunit protein mS37 (Chchd1).